A 314-amino-acid polypeptide reads, in one-letter code: Protein phosphatase PTC7 homolog fig (314 aa).

The 267-residue stretch at 43–309 (PYLVTVVQGR…DDITLILSSV (267 aa)) folds into the PPM-type phosphatase domain. Positions 87, 88, and 232 each coordinate Mn(2+).

The protein belongs to the PP2C family. Mg(2+) is required as a cofactor. Requires Mn(2+) as cofactor.

The catalysed reaction is O-phospho-L-seryl-[protein] + H2O = L-seryl-[protein] + phosphate. The enzyme catalyses O-phospho-L-threonyl-[protein] + H2O = L-threonyl-[protein] + phosphate. In Drosophila simulans (Fruit fly), this protein is Protein phosphatase PTC7 homolog fig.